A 494-amino-acid chain; its full sequence is Probable cytosol aminopeptidase (494 aa).

The Mn(2+) site is built by Lys260 and Asp265. Lys272 is an active-site residue. Mn(2+) contacts are provided by Asp283, Asp342, and Glu344. Arg346 is a catalytic residue.

This sequence belongs to the peptidase M17 family. The cofactor is Mn(2+).

The protein localises to the cytoplasm. The enzyme catalyses Release of an N-terminal amino acid, Xaa-|-Yaa-, in which Xaa is preferably Leu, but may be other amino acids including Pro although not Arg or Lys, and Yaa may be Pro. Amino acid amides and methyl esters are also readily hydrolyzed, but rates on arylamides are exceedingly low.. It carries out the reaction Release of an N-terminal amino acid, preferentially leucine, but not glutamic or aspartic acids.. Functionally, presumably involved in the processing and regular turnover of intracellular proteins. Catalyzes the removal of unsubstituted N-terminal amino acids from various peptides. The sequence is that of Probable cytosol aminopeptidase from Bacillus anthracis (strain CDC 684 / NRRL 3495).